An 87-amino-acid polypeptide reads, in one-letter code: UPF0335 protein RL4065 (87 aa).

Belongs to the UPF0335 family.

The sequence is that of UPF0335 protein RL4065 from Rhizobium johnstonii (strain DSM 114642 / LMG 32736 / 3841) (Rhizobium leguminosarum bv. viciae).